Consider the following 308-residue polypeptide: Transcriptional adapter 1-1 (308 aa).

Belongs to the TADA1 family. As to quaternary structure, component of the Spt-Ada-Gcn5 acetyltransferase (SAGA) complex consisting of wda/Taf5L, Saf6, Taf9, Taf10b, Taf12, Ada1, Spt3, Spt7, Spt20, Sf3b3, Sf3b5, Nipped-A/Tra1, a histone acetyltransferase (HAT) module made up of Gcn5, Ada2b (Isoform B), Ada3 and Sgf29, and a deubiquitinase (DUB) module made up of not/nonstop, Sgf11 and e(y)2 tethered to SAGA by Atxn7. Not a component of the Ada2a-containing ATAC complex.

The protein localises to the nucleus. In terms of biological role, component of the transcription regulatory complex SAGA, a multiprotein complex that activates transcription by remodeling chromatin and mediating histone acetylation and deubiquitination. The SAGA complex predominantly acetylates histone H3. In Drosophila melanogaster (Fruit fly), this protein is Transcriptional adapter 1-1.